The chain runs to 60 residues: UPF0434 protein Mfla_2088 (60 aa).

It belongs to the UPF0434 family.

The polypeptide is UPF0434 protein Mfla_2088 (Methylobacillus flagellatus (strain ATCC 51484 / DSM 6875 / VKM B-1610 / KT)).